We begin with the raw amino-acid sequence, 231 residues long: NADH-ubiquinone oxidoreductase chain 4 (231 aa).

The next 6 membrane-spanning stretches (helical) occupy residues 1–21, 34–54, 61–80, 84–106, 118–138, and 156–178; these read PIAG…YGII, LFIP…LTCL, SLIA…AITI, WGLS…LFCL, VLIL…WWLL, and LLIM…LSML.

Belongs to the complex I subunit 4 family.

The protein resides in the mitochondrion membrane. The enzyme catalyses a ubiquinone + NADH + 5 H(+)(in) = a ubiquinol + NAD(+) + 4 H(+)(out). In terms of biological role, core subunit of the mitochondrial membrane respiratory chain NADH dehydrogenase (Complex I) that is believed to belong to the minimal assembly required for catalysis. Complex I functions in the transfer of electrons from NADH to the respiratory chain. The immediate electron acceptor for the enzyme is believed to be ubiquinone. The sequence is that of NADH-ubiquinone oxidoreductase chain 4 (MT-ND4) from Azemiops feae (Fea's viper).